The sequence spans 318 residues: Thymidylate synthase (318 aa).

DUMP is bound by residues Arg25 and 180 to 181; that span reads RR. Cys200 functions as the Nucleophile in the catalytic mechanism. DUMP contacts are provided by residues 220–223, Asn231, and 261–263; these read RSGD and HIY. Residue Asp223 participates in (6R)-5,10-methylene-5,6,7,8-tetrahydrofolate binding. Ala317 provides a ligand contact to (6R)-5,10-methylene-5,6,7,8-tetrahydrofolate.

It belongs to the thymidylate synthase family. Bacterial-type ThyA subfamily. As to quaternary structure, homodimer.

It is found in the cytoplasm. It catalyses the reaction dUMP + (6R)-5,10-methylene-5,6,7,8-tetrahydrofolate = 7,8-dihydrofolate + dTMP. Its pathway is pyrimidine metabolism; dTTP biosynthesis. Functionally, catalyzes the reductive methylation of 2'-deoxyuridine-5'-monophosphate (dUMP) to 2'-deoxythymidine-5'-monophosphate (dTMP) while utilizing 5,10-methylenetetrahydrofolate (mTHF) as the methyl donor and reductant in the reaction, yielding dihydrofolate (DHF) as a by-product. This enzymatic reaction provides an intracellular de novo source of dTMP, an essential precursor for DNA biosynthesis. The polypeptide is Thymidylate synthase (Bacillus cereus (strain ATCC 10987 / NRS 248)).